Reading from the N-terminus, the 393-residue chain is Chalcone synthase DIII (393 aa).

Residue cysteine 164 is part of the active site.

Belongs to the thiolase-like superfamily. Chalcone/stilbene synthases family.

It carries out the reaction (E)-4-coumaroyl-CoA + 3 malonyl-CoA + 3 H(+) = 2',4,4',6'-tetrahydroxychalcone + 3 CO2 + 4 CoA. It functions in the pathway secondary metabolite biosynthesis; flavonoid biosynthesis. The primary product of this enzyme is 4,2',4',6'-tetrahydroxychalcone (also termed naringenin-chalcone or chalcone) which can under specific conditions spontaneously isomerize into naringenin. This is Chalcone synthase DIII (CHS-DIII) from Ipomoea batatas (Sweet potato).